Reading from the N-terminus, the 421-residue chain is Immunoglobulin heavy constant epsilon (421 aa).

4 consecutive Ig-like domains span residues 5–97 (PQLY…VNIT), 99–184 (PTLE…KVTS), 201–301 (PRGV…RSIT), and 310–410 (PEVY…KTIS). Cysteine 23 and cysteine 75 are joined by a disulfide. 9 N-linked (GlcNAc...) asparagine glycosylation sites follow: asparagine 43, asparagine 72, asparagine 84, asparagine 95, asparagine 166, asparagine 238, asparagine 261, asparagine 365, and asparagine 415. 3 disulfides stabilise this stretch: cysteine 121/cysteine 180, cysteine 226/cysteine 285, and cysteine 330/cysteine 392.

In terms of assembly, the basic structural unit consists of two identical heavy chains and two identical light chains; disulfide-linked. N-terminal variable regions of the heavy and light chains form the antigen binding sites, whereas the C-terminal constant regions of the heavy chains interact with immune receptors to mediate effector functions.

The protein resides in the secreted. The protein localises to the cell membrane. Constant region of immunoglobulin heavy chains. Immunoglobulins, also known as antibodies, are membrane-bound or secreted glycoproteins produced by B lymphocytes. In the recognition phase of humoral immunity, the membrane-bound immunoglobulins serve as receptors which, upon binding of a specific antigen, trigger the clonal expansion and differentiation of B lymphocytes into immunoglobulins-secreting plasma cells. Secreted immunoglobulins mediate the effector phase of humoral immunity, which results in the elimination of bound antigens. The antigen binding site is formed by the variable domain of one heavy chain, together with that of its associated light chain. Thus, each immunoglobulin has two antigen binding sites with remarkable affinity for a particular antigen. The variable domains are assembled by a process called V-(D)-J rearrangement and can then be subjected to somatic hypermutations which, after exposure to antigen and selection, allow affinity maturation for a particular antigen. The chain is Immunoglobulin heavy constant epsilon from Mus musculus (Mouse).